The sequence spans 272 residues: Shikimate dehydrogenase (NADP(+)) (272 aa).

Residues 14-16 (SKS) and Thr-61 each bind shikimate. Residue Lys-65 is the Proton acceptor of the active site. Glu-77 contacts NADP(+). Residues Asn-86 and Asp-102 each contribute to the shikimate site. NADP(+) is bound by residues 126-130 (GAGGA), 149-154 (NRTASR), and Met-213. Tyr-215 serves as a coordination point for shikimate. Gly-237 is a binding site for NADP(+).

The protein belongs to the shikimate dehydrogenase family. As to quaternary structure, homodimer.

It carries out the reaction shikimate + NADP(+) = 3-dehydroshikimate + NADPH + H(+). It functions in the pathway metabolic intermediate biosynthesis; chorismate biosynthesis; chorismate from D-erythrose 4-phosphate and phosphoenolpyruvate: step 4/7. Functionally, involved in the biosynthesis of the chorismate, which leads to the biosynthesis of aromatic amino acids. Catalyzes the reversible NADPH linked reduction of 3-dehydroshikimate (DHSA) to yield shikimate (SA). This Salmonella choleraesuis (strain SC-B67) protein is Shikimate dehydrogenase (NADP(+)).